A 217-amino-acid chain; its full sequence is Somatotropin (217 aa).

The signal sequence occupies residues 1–26; it reads MATGSRTSLLLAFTLLCLPQLKEAGA. Zn(2+) is bound at residue His-44. Cys-79 and Cys-191 are oxidised to a cystine. Ser-132 is modified (phosphoserine). Glu-200 provides a ligand contact to Zn(2+). A disulfide bridge connects residues Cys-208 and Cys-215.

The protein belongs to the somatotropin/prolactin family.

The protein resides in the secreted. Plays an important role in growth control. Its major role in stimulating body growth is to stimulate the liver and other tissues to secrete IGF1. It stimulates both the differentiation and proliferation of myoblasts. It also stimulates amino acid uptake and protein synthesis in muscle and other tissues. The polypeptide is Somatotropin (GH1) (Saimiri boliviensis boliviensis (Bolivian squirrel monkey)).